The chain runs to 207 residues: Small ribosomal subunit protein uS4A (207 aa).

One can recognise an S4 RNA-binding domain in the interval 98-158; that stretch reads TRLDNVAYRL…EKSKSSAKFK (61 aa).

This sequence belongs to the universal ribosomal protein uS4 family. As to quaternary structure, part of the 30S ribosomal subunit. Contacts protein S5. The interaction surface between S4 and S5 is involved in control of translational fidelity.

Its function is as follows. One of the primary rRNA binding proteins, it binds directly to 16S rRNA where it nucleates assembly of the body of the 30S subunit. Functionally, with S5 and S12 plays an important role in translational accuracy. The sequence is that of Small ribosomal subunit protein uS4A from Alkaliphilus oremlandii (strain OhILAs) (Clostridium oremlandii (strain OhILAs)).